The sequence spans 445 residues: Methionine aminopeptidase 2-1 (445 aa).

Residues 1 to 86 (MAAQASEDLQ…VQSEPPRVPL (86 aa)) are disordered. Residues 34-46 (GEAEDDSDDDADE) are compositionally biased toward acidic residues. A compositionally biased stretch (basic residues) spans 59–74 (AKKKKKRKSKKKKKGG). His198 lines the substrate pocket. Residues Asp218, Asp229, and His298 each contribute to the a divalent metal cation site. Substrate is bound at residue His306. Residues Glu331 and Glu426 each coordinate a divalent metal cation.

The protein belongs to the peptidase M24A family. Methionine aminopeptidase eukaryotic type 2 subfamily. Co(2+) is required as a cofactor. The cofactor is Zn(2+). Requires Mn(2+) as cofactor. It depends on Fe(2+) as a cofactor.

Its subcellular location is the cytoplasm. It catalyses the reaction Release of N-terminal amino acids, preferentially methionine, from peptides and arylamides.. Cotranslationally removes the N-terminal methionine from nascent proteins. The N-terminal methionine is often cleaved when the second residue in the primary sequence is small and uncharged (Met-Ala-, Cys, Gly, Pro, Ser, Thr, or Val). The chain is Methionine aminopeptidase 2-1 from Aspergillus flavus (strain ATCC 200026 / FGSC A1120 / IAM 13836 / NRRL 3357 / JCM 12722 / SRRC 167).